Here is a 212-residue protein sequence, read N- to C-terminus: NEDD4 family-interacting protein 1 (212 aa).

Positions 1 to 14 (MSEQSSSSRYQQLQ) are enriched in polar residues. Residues 1–40 (MSEQSSSSRYQQLQNEEEPGENAQASADAPPPYSSIAGES) form a disordered region. Over 1 to 107 (MSEQSSSSRY…ADQLRIGNDG (107 aa)) the chain is Cytoplasmic. 2 short sequence motifs (PPxY motif) span residues 30–33 (PPPY) and 55–58 (PPSY). A helical membrane pass occupies residues 108-128 (IFMLTFFMAFLFNWIGFFLSF). Over 129-134 (CLTSSA) the chain is Extracellular. The helical transmembrane segment at 135–155 (AGRYGAISGFGLSLIKWILIV) threads the bilayer. The Cytoplasmic segment spans residues 156–163 (RFSTYFPG). The helical transmembrane segment at 164 to 184 (YFDGQYWLWWVFLVLGFLLFL) threads the bilayer. Residues 185 to 212 (RGFINYAKVRKMPDNFSTLPRTRVLFIY) lie on the Extracellular side of the membrane.

Its subcellular location is the golgi apparatus membrane. May play a role in Golgi structure maintenance. This is NEDD4 family-interacting protein 1 (ndfip1) from Xenopus laevis (African clawed frog).